We begin with the raw amino-acid sequence, 276 residues long: Cerberus (276 aa).

The first 20 residues, 1-20 (MLLCVLKIYIIFCLVNDGAG), serve as a signal peptide directing secretion. Residues N103, N118, and N160 are each glycosylated (N-linked (GlcNAc...) asparagine). 4 disulfide bridges follow: C175–C221, C189–C235, C199–C251, and C203–C253. The CTCK domain occupies 175–259 (CKTLPFTQNI…ECACEAHKNN (85 aa)). A glycan (N-linked (GlcNAc...) asparagine) is linked at N234.

This sequence belongs to the DAN family. As to quaternary structure, the long chain interacts with nodal/nr-1, bmp4 and wnt8, thereby inhibiting their function. The short chain interacts with nodal/nr-1 but not bmp4 or wnt8. In terms of tissue distribution, expressed in the anterior endomesoderm of the early gastrula with expression expanded laterally around the margin at the endoderm/mesoderm boundary.

The protein localises to the secreted. Its function is as follows. Inhibits wnt, nodal/nr-1 and bmp signaling in the embryo to promote head formation and anterior neural induction. Within the endoderm, acts as an essential mediator of nodal/nr-1-induced cardiogenesis in the overlying mesoderm. The protein is Cerberus of Xenopus tropicalis (Western clawed frog).